The primary structure comprises 34 residues: NU-buthitoxin-Ptr1a (34 aa).

3 cysteine pairs are disulfide-bonded: Cys-6/Cys-27, Cys-12/Cys-32, and Cys-16/Cys-34.

In terms of tissue distribution, expressed by the venom gland.

It is found in the secreted. Functionally, toxin that acts as an agonist on melanocortin receptors (MC1R, MC3R, MC5R, MC5R). After binding to MC1R, the peptide activates the hMC1R/Gs pathway, but after binding to MC4R, it is not able to activate or antagonize the MC4R/Gs pathway. Inhibits melanocyte stimulating hormone (MSH)-binding to human receptors (Ki=2.9 uM to MC1R, Ki=3.9 uM to MC3R, Ki=2.6 uM to MC4R, Ki=2.2 uM to MC5R). This toxin is structurally unrelated to the natural agonists. The protein is NU-buthitoxin-Ptr1a of Parabuthus transvaalicus (Transvaal thick-tailed scorpion).